A 142-amino-acid chain; its full sequence is Large ribosomal subunit protein uL11 (142 aa).

It belongs to the universal ribosomal protein uL11 family. In terms of assembly, part of the ribosomal stalk of the 50S ribosomal subunit. Interacts with L10 and the large rRNA to form the base of the stalk. L10 forms an elongated spine to which L12 dimers bind in a sequential fashion forming a multimeric L10(L12)X complex. In terms of processing, one or more lysine residues are methylated.

In terms of biological role, forms part of the ribosomal stalk which helps the ribosome interact with GTP-bound translation factors. This Brucella anthropi (strain ATCC 49188 / DSM 6882 / CCUG 24695 / JCM 21032 / LMG 3331 / NBRC 15819 / NCTC 12168 / Alc 37) (Ochrobactrum anthropi) protein is Large ribosomal subunit protein uL11.